Here is a 493-residue protein sequence, read N- to C-terminus: MPDVTGDLAPLTPGARVLVTGAGITGRAVLGALAPLEVAATLCDDNADALAALAAKGVAVIAPGDAIASIGDYALVVTSPGFAPSAPVLAAAAAAGVPIWGDVELAWRLDAAGRYGPPRRWLVVTGTNGKTTTTSMLHDMLVAGGRRSVLCGNIGDPVLAVLDQPAELLAVELSSFQLHWAPSLRPEAGVVLNVAEDHLDWHGSMAAYARDKARVLDGRVAVVGLDDPVAAGLLPTAAATVRVGFRLGDPAAGELGVRDGKLIDRAFDDGVELADCADIGVAGPIGVLDALGAAALARAVGVAPGAIGAALASFQVGRHRAEVVGTVDGVVFIDDSKATNPHAAQASITAYDRVVWVAGGLLKGASVDELVRQVANRLAGAVLIGRDRQMVADALSRHAPDVPVVELVAGEDSGVLGTNESIESVGDHVTRVIEVGGRPVSDAVMSAVVSAARDLASPGDTVLLAPAGASFDQFSGYGQRGDAFAAAVRAAVG.

126–132 (GTNGKTT) is an ATP binding site.

The protein belongs to the MurCDEF family.

It is found in the cytoplasm. It catalyses the reaction UDP-N-acetyl-alpha-D-muramoyl-L-alanine + D-glutamate + ATP = UDP-N-acetyl-alpha-D-muramoyl-L-alanyl-D-glutamate + ADP + phosphate + H(+). Its pathway is cell wall biogenesis; peptidoglycan biosynthesis. Functionally, cell wall formation. Catalyzes the addition of glutamate to the nucleotide precursor UDP-N-acetylmuramoyl-L-alanine (UMA). This Mycolicibacterium smegmatis (strain ATCC 700084 / mc(2)155) (Mycobacterium smegmatis) protein is UDP-N-acetylmuramoylalanine--D-glutamate ligase.